A 459-amino-acid polypeptide reads, in one-letter code: MNIIEQKFYDSKAFFNTQQTKDISFRKEQLKKLSKAIKSYESDILEALYTDLGKNKVEAYATEIGITLKSIKIARKELKNWTKTKNVDTPLYLFPTKSYIKKEPYGTVLIIAPFNYPFQLVFEPLIGAIAAGNTAIIKPSELTPNVARVIKRLINETFDANYIEVIEGGIEETQTLIHLPFDYVFFTGSENVGKIVYQAASENLVPVTLEMGGKSPVIVDETANIKVASERICFGKFTNAGQTCVAPDYILVHESVKDDLITALSKTLREFYGQNIQQSPDYGRIVNLKHYHRLTSLLNSAQMNIVFGGHSDEDERYIEPTLLDHVTSDSAIMQEEIFGPILPILTYQSLDEAIAFIHQRPKPLSLYLFSEDENATQRVINELSFGGGAINDTLMHLANPKLPFGGVGASGMGRYHGKYSFDTFTHEKSYIFKSTRLESGVHLPPYKGKFKYIKAFFKN.

Residues 114–115 and 188–189 each bind NAD(+); these read FN and GS. The active-site Proton acceptor is Glu-210. Position 211 (Met-211) interacts with NAD(+). Cys-244 serves as the catalytic Nucleophile. Residue Glu-336 participates in NAD(+) binding.

The protein belongs to the aldehyde dehydrogenase family.

The catalysed reaction is 4,4'-diaponeurosporenal + NAD(+) + H2O = 4,4'-diaponeurosporenoate + NADH + 2 H(+). Its pathway is carotenoid biosynthesis; staphyloxanthin biosynthesis; staphyloxanthin from farnesyl diphosphate. Involved in the biosynthesis of the yellow-orange carotenoid staphyloxanthin, which plays a role in the virulence via its protective function against oxidative stress. Catalyzes the oxidation of 4,4'-diaponeurosporen-4-al to yield 4,4'-diaponeurosporenoic acid. In Staphylococcus aureus (strain NCTC 8325 / PS 47), this protein is 4,4'-diaponeurosporen-aldehyde dehydrogenase.